The chain runs to 110 residues: Transcription factor S (110 aa).

Cys4, Cys7, Cys22, Cys25, Cys71, Cys74, Cys99, and Cys102 together coordinate Zn(2+). The C4-type zinc-finger motif lies at 4–25 (CPKCGNLMLPDRKRKVWVCRSC). The TFIIS-type zinc finger occupies 67-107 (TKITCPKCGNDTAYWWEMQTRAGDEPSTIFYKCTKCGHTWR).

Belongs to the archaeal RpoM/eukaryotic RPA12/RPB9/RPC11 RNA polymerase family.

Induces RNA cleavage activity in the RNA polymerase. In its presence, the cleavage activity of the RNA polymerase truncates the RNA back to position +15 in a stepwise manner by releasing mainly dinucleotides from the 3'-end of the nascent RNA. The truncated RNAs are able to continue elongation. Involved in transcriptional proofreading and fidelity. Misincorporation of nucleotides during elongation of transcription leads to arrested elongation complexes which are rescued by TFS-promoted removal of a dinucleotide from the 3'-end. TFS is able to induce a cleavage resynthesis cycle in stalled elongation complexes (resulting from the next missing nucleotide or a reduced incorporation rate of a wrong nucleotide) preventing misincorporation and enabling proofreading in a post-incorporation manner. Pausing of elongation complexes is the main determinant of TFS-induced RNA cleavage. The chain is Transcription factor S from Thermococcus celer.